Consider the following 79-residue polypeptide: Acyl carrier protein (79 aa).

The 76-residue stretch at 3 to 78 (QEILEKVCSI…DAVKFIEEKK (76 aa)) folds into the Carrier domain. Ser-38 carries the post-translational modification O-(pantetheine 4'-phosphoryl)serine.

This sequence belongs to the acyl carrier protein (ACP) family. 4'-phosphopantetheine is transferred from CoA to a specific serine of apo-ACP by AcpS. This modification is essential for activity because fatty acids are bound in thioester linkage to the sulfhydryl of the prosthetic group.

The protein localises to the cytoplasm. It functions in the pathway lipid metabolism; fatty acid biosynthesis. In terms of biological role, carrier of the growing fatty acid chain in fatty acid biosynthesis. The chain is Acyl carrier protein from Prochlorococcus marinus (strain MIT 9301).